The following is a 473-amino-acid chain: Dolichyl-diphosphooligosaccharide--protein glycosyltransferase subunit 1B (473 aa).

The N-terminal stretch at 1–27 is a signal peptide; sequence MAPSLSTAVSSLLLLLLLAAAISVSSS. Topologically, residues 28–439 are lumenal; that stretch reads PPMPEDSIRV…PFQVYYEFNP (412 aa). Residues asparagine 307 and asparagine 361 are each glycosylated (N-linked (GlcNAc...) asparagine). Residues 440 to 460 traverse the membrane as a helical segment; sequence IFMLAEPLMLISAVFLFFVAC. Residues 461 to 473 are Cytoplasmic-facing; that stretch reads IAYLHMDLSIGKS.

Belongs to the OST1 family. In terms of assembly, component of the oligosaccharyltransferase (OST) complex.

Its subcellular location is the endoplasmic reticulum membrane. It functions in the pathway protein modification; protein glycosylation. Its function is as follows. Subunit of the oligosaccharyl transferase (OST) complex that catalyzes the initial transfer of a defined glycan (Glc(3)Man(9)GlcNAc(2) in eukaryotes) from the lipid carrier dolichol-pyrophosphate to an asparagine residue within an Asn-X-Ser/Thr consensus motif in nascent polypeptide chains, the first step in protein N-glycosylation. N-glycosylation occurs cotranslationally and the complex associates with the Sec61 complex at the channel-forming translocon complex that mediates protein translocation across the endoplasmic reticulum (ER). All subunits are required for a maximal enzyme activity. The protein is Dolichyl-diphosphooligosaccharide--protein glycosyltransferase subunit 1B (OST1B) of Oryza sativa subsp. japonica (Rice).